The following is a 330-amino-acid chain: Delta-aminolevulinic acid dehydratase (330 aa).

Residue lysine 203 is the Schiff-base intermediate with substrate of the active site. 5-aminolevulinate contacts are provided by arginine 213 and arginine 224. Glutamate 240 serves as a coordination point for Mg(2+). The Schiff-base intermediate with substrate role is filled by lysine 255. The 5-aminolevulinate site is built by serine 281 and tyrosine 320.

This sequence belongs to the ALAD family. As to quaternary structure, homooctamer.

It catalyses the reaction 2 5-aminolevulinate = porphobilinogen + 2 H2O + H(+). The protein operates within porphyrin-containing compound metabolism; protoporphyrin-IX biosynthesis; coproporphyrinogen-III from 5-aminolevulinate: step 1/4. Functionally, catalyzes an early step in the biosynthesis of tetrapyrroles. Binds two molecules of 5-aminolevulinate per subunit, each at a distinct site, and catalyzes their condensation to form porphobilinogen. The chain is Delta-aminolevulinic acid dehydratase (hemB) from Streptomyces coelicolor (strain ATCC BAA-471 / A3(2) / M145).